Reading from the N-terminus, the 166-residue chain is S-phase kinase-associated protein 1 homolog (166 aa).

The interaction with the F-box domain of F-box proteins stretch occupies residues isoleucine 105–serine 166.

This sequence belongs to the SKP1 family. Component of multiple SCF (SKP1-CUL1-F-box) E3 ubiquitin-protein ligase complexes formed of CUL1, SKP1, RBX1 and a variable F-box domain-containing protein as substrate-specific subunit.

Its pathway is protein modification; protein ubiquitination. Functionally, essential component of the SCF (SKP1-CUL1-F-box protein) ubiquitin ligase complex, which mediates the ubiquitination of proteins involved in cell cycle progression, signal transduction and transcription. In the SCF complex, serves as an adapter that links the F-box protein to CUL1. The functional specificity of the SCF complex depends on the F-box protein as substrate recognition component. Its association with the holoenzyme telomerase ribonucleoprotein complex suggests that it may play a role in turnover of holoenzyme telomerase complex components. The chain is S-phase kinase-associated protein 1 homolog from Tetrahymena thermophila (strain SB210).